Here is a 418-residue protein sequence, read N- to C-terminus: Cobalt-zinc-cadmium resistance protein CzcC (418 aa).

A signal peptide spans 1-22 (MRRLFLPLGLAVAFLSPNFAVA).

The protein belongs to the outer membrane factor (OMF) (TC 1.B.17) family.

The protein localises to the cell outer membrane. CzcC protein appears to modify the specificity of the system, perhaps by acting on the CzcB protein. When the CzcC protein is added to CzcA and CzcB, the efflux system gains specificity for cadmium and cobalt. The chain is Cobalt-zinc-cadmium resistance protein CzcC (czcC) from Cupriavidus metallidurans (strain ATCC 43123 / DSM 2839 / NBRC 102507 / CH34) (Ralstonia metallidurans).